The following is a 464-amino-acid chain: Cyclin-dependent kinase 8 (464 aa).

The interval 1-15 is interaction with CCNC; the sequence is MGYDFKVKLTGERER. A Protein kinase domain is found at 21 to 335; that stretch reads EYEGCKVGRG…SEQAMQDPYF (315 aa). Residues 27-35 and Lys-52 contribute to the ATP site; that span reads VGRGTYGHV. Residue Asp-151 is the Proton acceptor of the active site. Residues 360 to 464 form a disordered region; it reads TEEEPEDKAD…PQYSHQTHRY (105 aa). Over residues 373 to 390 the composition is skewed to low complexity; the sequence is QQQQQGNNHTNGAGHTGN. 2 stretches are compositionally biased toward polar residues: residues 410–426 and 434–446; these read TATSSGLIMTSDYQRSN and PGPSTSLPQSSMG. Low complexity predominate over residues 447-464; the sequence is YSSTSQQPPQYSHQTHRY.

Belongs to the protein kinase superfamily. CMGC Ser/Thr protein kinase family. CDC2/CDKX subfamily. In terms of assembly, component of the Mediator complex. Interacts with ccnc. Mg(2+) serves as cofactor.

It is found in the nucleus. It catalyses the reaction L-seryl-[protein] + ATP = O-phospho-L-seryl-[protein] + ADP + H(+). It carries out the reaction L-threonyl-[protein] + ATP = O-phospho-L-threonyl-[protein] + ADP + H(+). The enzyme catalyses [DNA-directed RNA polymerase] + ATP = phospho-[DNA-directed RNA polymerase] + ADP + H(+). In terms of biological role, component of the Mediator complex, a coactivator involved in regulated gene transcription of nearly all RNA polymerase II-dependent genes. Mediator functions as a bridge to convey information from gene-specific regulatory proteins to the basal RNA polymerase II transcription machinery. Mediator is recruited to promoters by direct interactions with regulatory proteins and serves as a scaffold for the assembly of a functional pre-initiation complex with RNA polymerase II and the general transcription factors. Phosphorylates the CTD (C-terminal domain) of the large subunit of RNA polymerase II (RNAp II), which may inhibit the formation of a transcription initiation complex. The polypeptide is Cyclin-dependent kinase 8 (cdk8) (Danio rerio (Zebrafish)).